Consider the following 530-residue polypeptide: Apolipoprotein N-acyltransferase (530 aa).

A run of 6 helical transmembrane segments spans residues 19 to 39 (LIAG…PGLL), 65 to 85 (WLAG…AFLV), 96 to 116 (FAVT…ALLY), 128 to 148 (LTFA…LTGF), 169 to 189 (LVGA…PAVW), and 197 to 217 (AATG…AIAL). A CN hydrolase domain is found at 232–485 (VQADIKQDLK…SGVIDAQIPG (254 aa)). Catalysis depends on glutamate 274, which acts as the Proton acceptor. Lysine 343 is a catalytic residue. Cysteine 396 (nucleophile) is an active-site residue.

This sequence belongs to the CN hydrolase family. Apolipoprotein N-acyltransferase subfamily.

The protein resides in the cell inner membrane. It carries out the reaction N-terminal S-1,2-diacyl-sn-glyceryl-L-cysteinyl-[lipoprotein] + a glycerophospholipid = N-acyl-S-1,2-diacyl-sn-glyceryl-L-cysteinyl-[lipoprotein] + a 2-acyl-sn-glycero-3-phospholipid + H(+). Its pathway is protein modification; lipoprotein biosynthesis (N-acyl transfer). Functionally, catalyzes the phospholipid dependent N-acylation of the N-terminal cysteine of apolipoprotein, the last step in lipoprotein maturation. The polypeptide is Apolipoprotein N-acyltransferase (Caulobacter vibrioides (strain ATCC 19089 / CIP 103742 / CB 15) (Caulobacter crescentus)).